A 484-amino-acid polypeptide reads, in one-letter code: MQWEVVIGLETHTQLSTASKIFSGTSTAFGAEPNTQASPVDLALPGVLPVLNRGAVERAIQFGLSIGATIAPRSIFARKNYFYPDLPKGYQISQYEIPVVQGGQITIQVEGKQGVYEKTVNLTRAHLEEDAGKSLHEDFAGMTGIDLNRAGTPLLEIVTEPDMRSSAEAVAYAKALHSLVVWLGICDGNMQEGSFRCDANVSVRPVGQEKFGTRREIKNLNSFRFLQQAIDYEVQWQIAEIEDGREIVQATVLFDPDTGETRAMRTKEDAHDYRYFPDPDLMPLEIDAAWVERVKSELPELPATMQARFVSQYGLSAYDASTITATKALAAYYEAVVTNVGAASAKPAANWVMGEIASQLNREGISIDEAPVRPAQLAKLLARITDGTVSNNTAKKDVFPAMWAGESDGDADAIIAAKGLKQMSDTGELEKIIDDVLAANAKSVEEFRAGKEKAFNALVGQAMKATKGKANPAQVNELLKKKLG.

The protein belongs to the GatB/GatE family. GatB subfamily. In terms of assembly, heterotrimer of A, B and C subunits.

The enzyme catalyses L-glutamyl-tRNA(Gln) + L-glutamine + ATP + H2O = L-glutaminyl-tRNA(Gln) + L-glutamate + ADP + phosphate + H(+). It carries out the reaction L-aspartyl-tRNA(Asn) + L-glutamine + ATP + H2O = L-asparaginyl-tRNA(Asn) + L-glutamate + ADP + phosphate + 2 H(+). In terms of biological role, allows the formation of correctly charged Asn-tRNA(Asn) or Gln-tRNA(Gln) through the transamidation of misacylated Asp-tRNA(Asn) or Glu-tRNA(Gln) in organisms which lack either or both of asparaginyl-tRNA or glutaminyl-tRNA synthetases. The reaction takes place in the presence of glutamine and ATP through an activated phospho-Asp-tRNA(Asn) or phospho-Glu-tRNA(Gln). This Cupriavidus metallidurans (strain ATCC 43123 / DSM 2839 / NBRC 102507 / CH34) (Ralstonia metallidurans) protein is Aspartyl/glutamyl-tRNA(Asn/Gln) amidotransferase subunit B.